An 821-amino-acid polypeptide reads, in one-letter code: uncharacterized protein (821 aa).

Disordered stretches follow at residues Met-1–Ser-20, Ser-55–Ser-96, Ser-134–His-205, Arg-240–Trp-263, Pro-274–Asn-293, Asn-360–Ser-381, Thr-430–Arg-450, Glu-467–Phe-497, Arg-512–Thr-535, and Ala-549–Thr-641. Polar residues-rich tracts occupy residues Tyr-58 to Gln-88 and Ser-185 to Asn-203. The span at Asn-279–Asn-293 shows a compositional bias: polar residues. Residues Thr-437–Arg-450 are compositionally biased toward polar residues. 2 stretches are compositionally biased toward low complexity: residues Thr-517–Ser-529 and Ser-568–Ser-578. The segment covering Gln-579–Arg-622 has biased composition (polar residues). The segment at Cys-766 to Arg-809 adopts an RING-type; atypical zinc-finger fold.

This is an uncharacterized protein from Schizosaccharomyces pombe (strain 972 / ATCC 24843) (Fission yeast).